Reading from the N-terminus, the 293-residue chain is Pantothenate synthetase (293 aa).

Position 38–45 (38–45) interacts with ATP; the sequence is MGALHEGH. Catalysis depends on His45, which acts as the Proton donor. Gln69 is a binding site for (R)-pantoate. Gln69 is a binding site for beta-alanine. 155 to 158 is an ATP binding site; sequence GEKD. A (R)-pantoate-binding site is contributed by Gln161. 192–195 is an ATP binding site; sequence QSSR.

The protein belongs to the pantothenate synthetase family. Homodimer.

The protein localises to the cytoplasm. The enzyme catalyses (R)-pantoate + beta-alanine + ATP = (R)-pantothenate + AMP + diphosphate + H(+). The protein operates within cofactor biosynthesis; (R)-pantothenate biosynthesis; (R)-pantothenate from (R)-pantoate and beta-alanine: step 1/1. In terms of biological role, catalyzes the condensation of pantoate with beta-alanine in an ATP-dependent reaction via a pantoyl-adenylate intermediate. The sequence is that of Pantothenate synthetase from Hyphomonas neptunium (strain ATCC 15444).